The sequence spans 385 residues: Probable caffeine synthase MTL2 (385 aa).

8 residues coordinate S-adenosyl-L-homocysteine: tyrosine 18, cysteine 62, asparagine 67, aspartate 101, leucine 102, serine 140, phenylalanine 141, and cysteine 157. Residues tyrosine 158, histidine 161, and tryptophan 162 each contribute to the caffeine site. Position 179 (asparagine 179) interacts with Mg(2+). Threonine 238 lines the caffeine pocket. The Mg(2+) site is built by aspartate 261, phenylalanine 263, and asparagine 264. Residue tyrosine 369 coordinates caffeine.

It belongs to the methyltransferase superfamily. Type-7 methyltransferase family. Mg(2+) serves as cofactor.

The protein operates within alkaloid biosynthesis. Functionally, may be involved in the biosynthesis of caffeine. This is Probable caffeine synthase MTL2 from Coffea canephora (Robusta coffee).